The primary structure comprises 80 residues: RNA-binding protein Hfq (80 aa).

The region spanning 10-70 (DAFLNQVRKE…ISTISPLRPV (61 aa)) is the Sm domain.

Belongs to the Hfq family. Homohexamer.

RNA chaperone that binds small regulatory RNA (sRNAs) and mRNAs to facilitate mRNA translational regulation in response to envelope stress, environmental stress and changes in metabolite concentrations. Also binds with high specificity to tRNAs. In Desulforamulus reducens (strain ATCC BAA-1160 / DSM 100696 / MI-1) (Desulfotomaculum reducens), this protein is RNA-binding protein Hfq.